Here is a 449-residue protein sequence, read N- to C-terminus: Serine--tRNA ligase (449 aa).

T256–E258 is an L-serine binding site. R287 to E289 serves as a coordination point for ATP. Residue E310 coordinates L-serine. E374–S377 contacts ATP. Residue S410 participates in L-serine binding.

It belongs to the class-II aminoacyl-tRNA synthetase family. Type-1 seryl-tRNA synthetase subfamily. Homodimer. The tRNA molecule binds across the dimer.

It localises to the cytoplasm. It carries out the reaction tRNA(Ser) + L-serine + ATP = L-seryl-tRNA(Ser) + AMP + diphosphate + H(+). It catalyses the reaction tRNA(Sec) + L-serine + ATP = L-seryl-tRNA(Sec) + AMP + diphosphate + H(+). It functions in the pathway aminoacyl-tRNA biosynthesis; selenocysteinyl-tRNA(Sec) biosynthesis; L-seryl-tRNA(Sec) from L-serine and tRNA(Sec): step 1/1. In terms of biological role, catalyzes the attachment of serine to tRNA(Ser). Is also able to aminoacylate tRNA(Sec) with serine, to form the misacylated tRNA L-seryl-tRNA(Sec), which will be further converted into selenocysteinyl-tRNA(Sec). The chain is Serine--tRNA ligase from Xanthomonas oryzae pv. oryzae (strain MAFF 311018).